Here is a 217-residue protein sequence, read N- to C-terminus: Small ribosomal subunit protein uS3 (217 aa).

In terms of domain architecture, KH type-2 spans 38–106 (IRKFINKELA…QVHINIIEIK (69 aa)).

It belongs to the universal ribosomal protein uS3 family. In terms of assembly, part of the 30S ribosomal subunit. Forms a tight complex with proteins S10 and S14.

Functionally, binds the lower part of the 30S subunit head. Binds mRNA in the 70S ribosome, positioning it for translation. This chain is Small ribosomal subunit protein uS3, found in Streptococcus pyogenes serotype M6 (strain ATCC BAA-946 / MGAS10394).